A 252-amino-acid polypeptide reads, in one-letter code: ATP synthase subunit a (252 aa).

The next 5 membrane-spanning stretches (helical) occupy residues Gly33–Ala53, Val92–Val112, Asp130–Leu150, Leu196–Leu216, and Gly217–Gly237.

The protein belongs to the ATPase A chain family. As to quaternary structure, F-type ATPases have 2 components, CF(1) - the catalytic core - and CF(0) - the membrane proton channel. CF(1) has five subunits: alpha(3), beta(3), gamma(1), delta(1), epsilon(1). CF(0) has four main subunits: a, b, b' and c.

It localises to the cellular thylakoid membrane. In terms of biological role, key component of the proton channel; it plays a direct role in the translocation of protons across the membrane. This Thermosynechococcus vestitus (strain NIES-2133 / IAM M-273 / BP-1) protein is ATP synthase subunit a.